The chain runs to 153 residues: uncharacterized protein (153 aa).

The segment at 1–88 (MDKDRPGLPA…VPPPQLDHPG (88 aa)) is disordered.

This is an uncharacterized protein from Epstein-Barr virus (strain P3HR-1) (HHV-4).